A 79-amino-acid polypeptide reads, in one-letter code: Ornithine decarboxylase (79 aa).

Residues Ser8, Gly45, and 75 to 78 contribute to the pyridoxal 5'-phosphate site; that span reads EPGR.

The protein belongs to the Orn/Lys/Arg decarboxylase class-II family. As to quaternary structure, homodimer. Only the dimer is catalytically active, as the active sites are constructed of residues from both monomers. The cofactor is pyridoxal 5'-phosphate.

Its subcellular location is the cytoplasm. The catalysed reaction is L-ornithine + H(+) = putrescine + CO2. Its pathway is amine and polyamine biosynthesis; putrescine biosynthesis via L-ornithine pathway; putrescine from L-ornithine: step 1/1. With respect to regulation, inhibited by antizyme (AZ) OAZ1 in response to polyamine levels. AZ inhibits the assembly of the functional homodimer by binding to ODC monomers and targeting them for ubiquitin-independent proteolytic destruction by the 26S proteasome. In terms of biological role, catalyzes the first and rate-limiting step of polyamine biosynthesis that converts ornithine into putrescine, which is the precursor for the polyamines, spermidine and spermine. Polyamines are essential for cell proliferation and are implicated in cellular processes, ranging from DNA replication to apoptosis. The sequence is that of Ornithine decarboxylase (ODC) from Paracoccidioides brasiliensis.